Here is a 1105-residue protein sequence, read N- to C-terminus: SWI/SNF complex subunit SMARCC1 (1105 aa).

The residue at position 2 (Ala2) is an N-acetylalanine. The segment at 28 to 302 (LAVYRRKDGG…PVSFRQRIST (275 aa)) is marR-like, BRCT and chromo domains module. The region spanning 38–164 (PATKFWESPE…IEKTLVQNNC (127 aa)) is the MarR-like domain. Residues 168-211 (PNIYLIPDIDLKLANKLKDIIKRHQGTFTDEKSKASHHIYPYSS) form the BRCT; N-terminus domain. Lys179 is covalently cross-linked (Glycyl lysine isopeptide (Lys-Gly) (interchain with G-Cter in SUMO2)). The Chromo domain occupies 217-245 (EWLRPVMRKEKQVLVHWGFYPDSYDTWVH). One can recognise a BRCT; C-terminus domain in the interval 261–285 (KPWKVHVKWILDTDIFNEWMNEEDY). Residues 296-439 (FRQRISTKNE…DQSRSVDLGE (144 aa)) form a disordered region. Residues 302–318 (TKNEEPVRSPERRDRKA) are compositionally biased toward basic and acidic residues. Phosphoserine occurs at positions 310, 328, and 330. Thr335 carries the post-translational modification Phosphothreonine. Residues Lys345 and Lys346 each carry the N6-acetyllysine modification. Ser350 is subject to Phosphoserine. Lys354 bears the N6-acetyllysine mark. Ser357 carries the post-translational modification Phosphoserine. Lys359 carries the N6-acetyllysine; alternate modification. Lys359 is covalently cross-linked (Glycyl lysine isopeptide (Lys-Gly) (interchain with G-Cter in SUMO2); alternate). Thr398 carries the post-translational modification Phosphothreonine. The region spanning 449 to 546 (IIIPSYASWF…YQVDPESRPM (98 aa)) is the SWIRM domain. Ser573 is modified (phosphoserine). Residue Lys592 forms a Glycyl lysine isopeptide (Lys-Gly) (interchain with G-Cter in SUMO2) linkage. Residues 618–669 (SAGREWTEQETLLLLEALEMYKDDWNKVSEHVGSRTQDECILHFLRLPIEDP) form the SANT domain. Residue Lys739 forms a Glycyl lysine isopeptide (Lys-Gly) (interchain with G-Cter in SUMO2) linkage. Positions 745–860 (ARASGKVDPT…DTGKKKVEHE (116 aa)) are disordered. Acidic residues predominate over residues 776–785 (AEEEKMEADP). Residues 789-860 (QPEKAENKVE…DTGKKKVEHE (72 aa)) are compositionally biased toward basic and acidic residues. Lys796 is covalently cross-linked (Glycyl lysine isopeptide (Lys-Gly) (interchain with G-Cter in SUMO2)). Phosphoserine occurs at positions 822 and 825. Residues Lys829 and Lys856 each participate in a glycyl lysine isopeptide (Lys-Gly) (interchain with G-Cter in SUMO2) cross-link. A coiled-coil region spans residues 914-946 (FEELETIMDREKEALEQQRQQLLTERQNFHMEQ). The residue at position 948 (Lys948) is an N6-acetyllysine. Disordered regions lie at residues 956–1028 (QQME…PGQH) and 1041–1105 (IHPS…SAAP). Positions 957 to 993 (QMEQQQHGQNPQQAHQHSGGPGLAPLGAAGHPGMMPH) are enriched in low complexity. 2 stretches are compositionally biased toward pro residues: residues 994-1017 (QQPPPYPLMHHQMPPPHPPQPGQI) and 1048-1057 (PTPPGMPPMP). The residue at position 1064 (Arg1064) is an Asymmetric dimethylarginine. The segment covering 1073-1105 (MYPPPPQQQPPPPPPADGVPPPPAPGPPASAAP) has biased composition (pro residues).

It belongs to the SMARCC family. In terms of assembly, component of the multiprotein chromatin-remodeling complexes SWI/SNF: SWI/SNF-A (BAF), SWI/SNF-B (PBAF) and related complexes. The canonical complex contains a catalytic subunit (either SMARCA4/BRG1/BAF190A or SMARCA2/BRM/BAF190B) and at least SMARCE1, ACTL6A/BAF53, SMARCC1/BAF155, SMARCC2/BAF170, and SMARCB1/SNF5/BAF47. Other subunits specific to each of the complexes may also be present permitting several possible combinations developmentally and tissue specific. Component of the BAF complex, which includes at least actin (ACTB), ARID1A/BAF250A, ARID1B/BAF250B, SMARCA2/BRM, SMARCA4/BRG1, ACTL6A/BAF53, ACTL6B/BAF53B, SMARCE1/BAF57, SMARCC1/BAF155, SMARCC2/BAF170, SMARCB1/SNF5/INI1, and one or more SMARCD1/BAF60A, SMARCD2/BAF60B, or SMARCD3/BAF60C. In muscle cells, the BAF complex also contains DPF3. Component of neural progenitors-specific chromatin remodeling complex (npBAF complex) composed of at least, ARID1A/BAF250A or ARID1B/BAF250B, SMARCD1/BAF60A, SMARCD3/BAF60C, SMARCA2/BRM/BAF190B, SMARCA4/BRG1/BAF190A, SMARCB1/BAF47, SMARCC1/BAF155, SMARCE1/BAF57, SMARCC2/BAF170, PHF10/BAF45A, ACTL6A/BAF53A and actin. Component of neuron-specific chromatin remodeling complex (nBAF complex) composed of at least, ARID1A/BAF250A or ARID1B/BAF250B, SMARCD1/BAF60A, SMARCD3/BAF60C, SMARCA2/BRM/BAF190B, SMARCA4/BRG1/BAF190A, SMARCB1/BAF47, SMARCC1/BAF155, SMARCE1/BAF57, SMARCC2/BAF170, DPF1/BAF45B, DPF3/BAF45C, ACTL6B/BAF53B and actin. Component of the SWI/SNF-B (PBAF) chromatin remodeling complex, at least composed of SMARCA4/BRG1, SMARCB1/BAF47/SNF5, ACTL6A/BAF53A or ACTL6B/BAF53B, SMARCE1/BAF57, SMARCD1/BAF60A, SMARCD2/BAF60B, perhaps SMARCD3/BAF60C, SMARCC1/BAF155, SMARCC2/BAF170, PBRM1/BAF180, ARID2/BAF200 and actin. Component of SWI/SNF (GBAF) subcomplex, which includes at least BICRA or BICRAL (mutually exclusive), BRD9, SS18, SMARCA2/BRM, SMARCA4/BRG1/BAF190A, ACTL6A/BAF53, SMARCC1/BAF155, and SMARCD1/BAF60A. May also interact with the SIN3A histone deacetylase transcription repressor complex in conjunction with SMARCA2 and SMARCA4. The minimal complex composed of SMARCC1 and SMARCA4 seems to be able to associate with cyclin such as CCNE1 or transcription factors such as KLF1 or GATA1. Interacts with NR3C1 and SMARD1. Interacts with TRIP12; leading to disrupt interaction between TRIP12 and SMARCE1 and prevent SMARCE1 ubiquitination. Interacts with CEBPB (when not methylated). Interacts with KDM6B. Interacts with MKKS; the interaction takes place predominantly in the cytoplasm and may modulate SMARCC1 location. Interacts with DPF2. Interacts with PRDM1/BLIMP1. Interacts with DPF3a (isoform 2 of DPF3/BAF45C) and with HDGFL2 in a DPF3a-dependent manner. In terms of processing, phosphorylated on undefined residues at the G2/M transition by ERK1 and other kinases. This may contribute to cell cycle specific inactivation of remodeling complexes containing the phosphorylated protein. Expressed in brain, heart, muscle, placenta, lung, liver, muscle, kidney and pancreas.

It localises to the nucleus. The protein localises to the cytoplasm. Functionally, involved in transcriptional activation and repression of select genes by chromatin remodeling (alteration of DNA-nucleosome topology). Component of SWI/SNF chromatin remodeling complexes that carry out key enzymatic activities, changing chromatin structure by altering DNA-histone contacts within a nucleosome in an ATP-dependent manner. May stimulate the ATPase activity of the catalytic subunit of the complex. Belongs to the neural progenitors-specific chromatin remodeling complex (npBAF complex) and the neuron-specific chromatin remodeling complex (nBAF complex). During neural development a switch from a stem/progenitor to a postmitotic chromatin remodeling mechanism occurs as neurons exit the cell cycle and become committed to their adult state. The transition from proliferating neural stem/progenitor cells to postmitotic neurons requires a switch in subunit composition of the npBAF and nBAF complexes. As neural progenitors exit mitosis and differentiate into neurons, npBAF complexes which contain ACTL6A/BAF53A and PHF10/BAF45A, are exchanged for homologous alternative ACTL6B/BAF53B and DPF1/BAF45B or DPF3/BAF45C subunits in neuron-specific complexes (nBAF). The npBAF complex is essential for the self-renewal/proliferative capacity of the multipotent neural stem cells. The nBAF complex along with CREST plays a role regulating the activity of genes essential for dendrite growth. The protein is SWI/SNF complex subunit SMARCC1 of Homo sapiens (Human).